The following is a 661-amino-acid chain: tRNA uridine 5-carboxymethylaminomethyl modification enzyme MnmG (661 aa).

Residue G13–G18 coordinates FAD. G285–F299 contributes to the NAD(+) binding site.

The protein belongs to the MnmG family. As to quaternary structure, homodimer. Heterotetramer of two MnmE and two MnmG subunits. The cofactor is FAD.

It localises to the cytoplasm. Functionally, NAD-binding protein involved in the addition of a carboxymethylaminomethyl (cmnm) group at the wobble position (U34) of certain tRNAs, forming tRNA-cmnm(5)s(2)U34. This chain is tRNA uridine 5-carboxymethylaminomethyl modification enzyme MnmG, found in Acidovorax sp. (strain JS42).